The chain runs to 338 residues: Glycerol-3-phosphate dehydrogenase [NAD(P)+] (338 aa).

Ser13, Trp14, and Lys108 together coordinate NADPH. Residues Lys108, Gly139, and Ser141 each contribute to the sn-glycerol 3-phosphate site. Ala143 contacts NADPH. Positions 194, 247, 257, 258, and 259 each coordinate sn-glycerol 3-phosphate. Residue Lys194 is the Proton acceptor of the active site. Arg258 provides a ligand contact to NADPH. The NADPH site is built by Val282 and Glu284.

This sequence belongs to the NAD-dependent glycerol-3-phosphate dehydrogenase family.

It is found in the cytoplasm. It carries out the reaction sn-glycerol 3-phosphate + NAD(+) = dihydroxyacetone phosphate + NADH + H(+). It catalyses the reaction sn-glycerol 3-phosphate + NADP(+) = dihydroxyacetone phosphate + NADPH + H(+). The protein operates within membrane lipid metabolism; glycerophospholipid metabolism. Functionally, catalyzes the reduction of the glycolytic intermediate dihydroxyacetone phosphate (DHAP) to sn-glycerol 3-phosphate (G3P), the key precursor for phospholipid synthesis. This is Glycerol-3-phosphate dehydrogenase [NAD(P)+] from Streptococcus pyogenes serotype M28 (strain MGAS6180).